A 726-amino-acid chain; its full sequence is Catalase-peroxidase (726 aa).

The tryptophyl-tyrosyl-methioninium (Trp-Tyr) (with M-242) cross-link spans 93–216 (WHSAGTYRVH…LAAVQMGLIY (124 aa)). Catalysis depends on H94, which acts as the Proton acceptor. The segment at residues 216–242 (YVNPEGPNGNPDPVAAAVDIRETFTRM) is a cross-link (tryptophyl-tyrosyl-methioninium (Tyr-Met) (with W-93)). H257 provides a ligand contact to heme b. Residues 471–490 (GSDKRGGANGARIRLSPQKD) form a disordered region.

Belongs to the peroxidase family. Peroxidase/catalase subfamily. Homodimer or homotetramer. Heme b is required as a cofactor. Formation of the three residue Trp-Tyr-Met cross-link is important for the catalase, but not the peroxidase activity of the enzyme.

The enzyme catalyses H2O2 + AH2 = A + 2 H2O. It carries out the reaction 2 H2O2 = O2 + 2 H2O. Functionally, bifunctional enzyme with both catalase and broad-spectrum peroxidase activity. The chain is Catalase-peroxidase from Methylacidiphilum infernorum (isolate V4) (Methylokorus infernorum (strain V4)).